The primary structure comprises 217 residues: ATP-dependent Clp protease proteolytic subunit (217 aa).

Ser121 acts as the Nucleophile in catalysis. His146 is a catalytic residue.

The protein belongs to the peptidase S14 family. In terms of assembly, fourteen ClpP subunits assemble into 2 heptameric rings which stack back to back to give a disk-like structure with a central cavity, resembling the structure of eukaryotic proteasomes.

The protein resides in the cytoplasm. It carries out the reaction Hydrolysis of proteins to small peptides in the presence of ATP and magnesium. alpha-casein is the usual test substrate. In the absence of ATP, only oligopeptides shorter than five residues are hydrolyzed (such as succinyl-Leu-Tyr-|-NHMec, and Leu-Tyr-Leu-|-Tyr-Trp, in which cleavage of the -Tyr-|-Leu- and -Tyr-|-Trp bonds also occurs).. Functionally, cleaves peptides in various proteins in a process that requires ATP hydrolysis. Has a chymotrypsin-like activity. Plays a major role in the degradation of misfolded proteins. This Burkholderia cenocepacia (strain HI2424) protein is ATP-dependent Clp protease proteolytic subunit.